Consider the following 341-residue polypeptide: Holliday junction branch migration complex subunit RuvB (341 aa).

Residues 1–180 (MAKSHTLNPE…FGIQLRLDYY (180 aa)) form a large ATPase domain (RuvB-L) region. ATP contacts are provided by leucine 19, arginine 20, glycine 61, lysine 64, threonine 65, threonine 66, arginine 170, tyrosine 180, and arginine 217. Mg(2+) is bound at residue threonine 65. Residues 181–251 (NDEEMKEIVL…LCLKAFEKMG (71 aa)) are small ATPAse domain (RuvB-S). The interval 254-341 (DLGLDGMDRQ…ENHGQDPTLF (88 aa)) is head domain (RuvB-H). DNA-binding residues include arginine 309 and arginine 314.

It belongs to the RuvB family. Homohexamer. Forms an RuvA(8)-RuvB(12)-Holliday junction (HJ) complex. HJ DNA is sandwiched between 2 RuvA tetramers; dsDNA enters through RuvA and exits via RuvB. An RuvB hexamer assembles on each DNA strand where it exits the tetramer. Each RuvB hexamer is contacted by two RuvA subunits (via domain III) on 2 adjacent RuvB subunits; this complex drives branch migration. In the full resolvosome a probable DNA-RuvA(4)-RuvB(12)-RuvC(2) complex forms which resolves the HJ.

The protein resides in the cytoplasm. It carries out the reaction ATP + H2O = ADP + phosphate + H(+). The RuvA-RuvB-RuvC complex processes Holliday junction (HJ) DNA during genetic recombination and DNA repair, while the RuvA-RuvB complex plays an important role in the rescue of blocked DNA replication forks via replication fork reversal (RFR). RuvA specifically binds to HJ cruciform DNA, conferring on it an open structure. The RuvB hexamer acts as an ATP-dependent pump, pulling dsDNA into and through the RuvAB complex. RuvB forms 2 homohexamers on either side of HJ DNA bound by 1 or 2 RuvA tetramers; 4 subunits per hexamer contact DNA at a time. Coordinated motions by a converter formed by DNA-disengaged RuvB subunits stimulates ATP hydrolysis and nucleotide exchange. Immobilization of the converter enables RuvB to convert the ATP-contained energy into a lever motion, pulling 2 nucleotides of DNA out of the RuvA tetramer per ATP hydrolyzed, thus driving DNA branch migration. The RuvB motors rotate together with the DNA substrate, which together with the progressing nucleotide cycle form the mechanistic basis for DNA recombination by continuous HJ branch migration. Branch migration allows RuvC to scan DNA until it finds its consensus sequence, where it cleaves and resolves cruciform DNA. This is Holliday junction branch migration complex subunit RuvB from Leptospira borgpetersenii serovar Hardjo-bovis (strain JB197).